The following is a 115-amino-acid chain: Meiotically up-regulated gene 168 protein (115 aa).

Residues 82 to 115 (SVSPVHTKAEEPGLGLTPMNSADFSNKIASRYRS) are disordered. Polar residues predominate over residues 99-109 (PMNSADFSNKI).

The protein localises to the nucleus. Its function is as follows. Has a role in meiosis. The sequence is that of Meiotically up-regulated gene 168 protein (mug168) from Schizosaccharomyces pombe (strain 972 / ATCC 24843) (Fission yeast).